The primary structure comprises 241 residues: Histidine-rich protein PFHRP-III (241 aa).

The first 21 residues, 1–21, serve as a signal peptide directing secretion; sequence MVSFSKNKVLSAAVFASVLLL. Residues 52–76 show a composition bias toward basic and acidic residues; that stretch reads AHAGDAHHAHHVADAHHAHHVADAH. 2 disordered regions span residues 52–145 and 195–241; these read AHAG…ANAH and AHHD…HLHH. The segment covering 84-145 has biased composition (low complexity); it reads AHHAANAHHA…ANAHHAANAH (62 aa). Basic and acidic residues predominate over residues 195 to 231; it reads AHHDGAHHDDAHHDGAHHDDAHHDGAHHDGAHHDGAH.

The polypeptide is Histidine-rich protein PFHRP-III (Plasmodium falciparum).